Consider the following 173-residue polypeptide: NADH-ubiquinone oxidoreductase chain 6 (173 aa).

Helical transmembrane passes span 1–21 (MTYF…AVAS), 27–47 (YGVV…LSLG), 48–68 (VSFV…VVFV), 87–107 (VVGY…VGGF), and 139–159 (CGVG…FVVL).

This sequence belongs to the complex I subunit 6 family.

It localises to the mitochondrion membrane. It catalyses the reaction a ubiquinone + NADH + 5 H(+)(in) = a ubiquinol + NAD(+) + 4 H(+)(out). Core subunit of the mitochondrial membrane respiratory chain NADH dehydrogenase (Complex I) that is believed to belong to the minimal assembly required for catalysis. Complex I functions in the transfer of electrons from NADH to the respiratory chain. The immediate electron acceptor for the enzyme is believed to be ubiquinone. This is NADH-ubiquinone oxidoreductase chain 6 (MT-ND6) from Aethia cristatella (Crested auklet).